The chain runs to 142 residues: Prefoldin subunit alpha (142 aa).

It belongs to the prefoldin subunit alpha family. Heterohexamer of two alpha and four beta subunits.

The protein localises to the cytoplasm. Its function is as follows. Molecular chaperone capable of stabilizing a range of proteins. Seems to fulfill an ATP-independent, HSP70-like function in archaeal de novo protein folding. This chain is Prefoldin subunit alpha, found in Methanosarcina mazei (strain ATCC BAA-159 / DSM 3647 / Goe1 / Go1 / JCM 11833 / OCM 88) (Methanosarcina frisia).